Here is a 125-residue protein sequence, read N- to C-terminus: Protein MGF 110-4L (125 aa).

The signal sequence occupies residues 1–29 (MLVVFFLGILGLLANQILGLPTQAGGHLR). Asparagine 65 carries N-linked (GlcNAc...) asparagine; by host glycosylation. The Prevents secretion from ER signature appears at 122–125 (KEDL).

It belongs to the asfivirus MGF 110 family.

It is found in the virion. The protein localises to the host endoplasmic reticulum-Golgi intermediate compartment. Functionally, causes the redistribution of lumenal ER protein to an enlarged ERGIC compartment. In Ornithodoros (relapsing fever ticks), this protein is Protein MGF 110-4L.